The sequence spans 332 residues: Holliday junction branch migration complex subunit RuvB (332 aa).

The large ATPase domain (RuvB-L) stretch occupies residues 1 to 182; it reads MKLNKNSELK…FGLILKLNYY (182 aa). ATP is bound by residues Leu21, Arg22, Gly63, Lys66, Thr67, Thr68, 129-131, Arg172, Tyr182, and Arg219; that span reads EDY. Thr67 lines the Mg(2+) pocket. The small ATPAse domain (RuvB-S) stretch occupies residues 183 to 253; it reads SEDELELIIK…ISEIALEKLT (71 aa). The tract at residues 256 to 332 is head domain (RuvB-H); that stretch reads KNGLDDADYT…FKLFKNDKIK (77 aa). Positions 311 and 316 each coordinate DNA.

Belongs to the RuvB family. As to quaternary structure, homohexamer. Forms an RuvA(8)-RuvB(12)-Holliday junction (HJ) complex. HJ DNA is sandwiched between 2 RuvA tetramers; dsDNA enters through RuvA and exits via RuvB. An RuvB hexamer assembles on each DNA strand where it exits the tetramer. Each RuvB hexamer is contacted by two RuvA subunits (via domain III) on 2 adjacent RuvB subunits; this complex drives branch migration. In the full resolvosome a probable DNA-RuvA(4)-RuvB(12)-RuvC(2) complex forms which resolves the HJ.

The protein localises to the cytoplasm. The catalysed reaction is ATP + H2O = ADP + phosphate + H(+). Functionally, the RuvA-RuvB-RuvC complex processes Holliday junction (HJ) DNA during genetic recombination and DNA repair, while the RuvA-RuvB complex plays an important role in the rescue of blocked DNA replication forks via replication fork reversal (RFR). RuvA specifically binds to HJ cruciform DNA, conferring on it an open structure. The RuvB hexamer acts as an ATP-dependent pump, pulling dsDNA into and through the RuvAB complex. RuvB forms 2 homohexamers on either side of HJ DNA bound by 1 or 2 RuvA tetramers; 4 subunits per hexamer contact DNA at a time. Coordinated motions by a converter formed by DNA-disengaged RuvB subunits stimulates ATP hydrolysis and nucleotide exchange. Immobilization of the converter enables RuvB to convert the ATP-contained energy into a lever motion, pulling 2 nucleotides of DNA out of the RuvA tetramer per ATP hydrolyzed, thus driving DNA branch migration. The RuvB motors rotate together with the DNA substrate, which together with the progressing nucleotide cycle form the mechanistic basis for DNA recombination by continuous HJ branch migration. Branch migration allows RuvC to scan DNA until it finds its consensus sequence, where it cleaves and resolves cruciform DNA. The chain is Holliday junction branch migration complex subunit RuvB from Phytoplasma mali (strain AT).